Here is a 940-residue protein sequence, read N- to C-terminus: MAEVTVSELAKSVGASVDRILAQMKQAGLSHQTPDDTVSDEEKQTLLSFLKSSHGESAAAPKKITLKRKTTTTLKTGSGSGRKTVNVEVRKKRTYVKRELTAEDATETAADEVLIPEQEQLESTSVAEIPESVSSDTAVEEIVADTVVEAEVEAASPEPEPEVEATPEPEVEDVVAEEAEPAAAEPAPAPVVEQRSSFVDDAEILRQRAAVRKKAEEEAEVARRKADAEKAEAAAKQKAEQAAVQKGSVEKPAAGDKDESKHHKKPKPKSETEEFDEEAKAKHNKKAGKAVKKVAGPKKVASALDYVEDKEEIDEVIHSAPKSKKGGQNNNSSNSGSRPLIKVANRHGFKKPTGKITYKVEIPEEIVVSELAQRMNVKAGEVVKHLFKLGTMVTINQAIDQETAQLVVEEMGHEAVLVSGDAVEQKLREQVVEVDDAELVARAPVVTVMGHVDHGKTSLLDYIRKTRVASGEAGGITQHIGAYRVNTSHGELAFLDTPGHAAFTAMRARGAQCTDVVILVVAADDGVMPQTEEAVQHARAAGVPLVVAVNKIDKEAADPDRVKNELSAKDVIPEDWGGDTQFINVSAQTGEGIEELLEAVALQAELLELSAPVNVPARGVVIESRMDKGRGVVATVLVQGGELKRGDIMLAGQSFGRVRAMVNEYGDNIDSAPPSTPVEILGLDTPPEAGDEFLVVPDERKAREVSEFRAEKERTERMQRQQAAKLENMFAGMGSDEKKILPIVLKTDVRGSLEAIQAALLDVGNDEVQVNFVGGGVGGITENDVNLALTSGAVIVGFNVRADNSARKLAESESAEIRYYSIIYQLIDEVKSALAGMLDPERVEEIVGIAEVRDVFRSPKFGQVAGCMVVEGNVYRNKPIRVLRDNVVIFEGELESLRRFKDDVNEVRNGMECGIGVKNYDVKVGDQIEVFDVKEVAREL.

Disordered regions lie at residues 116–137 (PEQEQLESTSVAEIPESVSSDT), 151–196 (EVEA…EQRS), 210–294 (AVRK…VKKV), and 318–346 (HSAPKSKKGGQNNNSSNSGSRPLIKVANR). A compositionally biased stretch (polar residues) spans 121–137 (LESTSVAEIPESVSSDT). A compositionally biased stretch (acidic residues) spans 159-180 (PEPEVEATPEPEVEDVVAEEAE). Low complexity predominate over residues 181–193 (PAAAEPAPAPVVE). Basic and acidic residues predominate over residues 213–239 (KKAEEEAEVARRKADAEKAEAAAKQKA). The span at 282–294 (KHNKKAGKAVKKV) shows a compositional bias: basic residues. Over residues 326 to 337 (GGQNNNSSNSGS) the composition is skewed to low complexity. The 170-residue stretch at 441-610 (ARAPVVTVMG…ALQAELLELS (170 aa)) folds into the tr-type G domain. Residues 450–457 (GHVDHGKT) form a G1 region. Residue 450–457 (GHVDHGKT) coordinates GTP. The G2 stretch occupies residues 475-479 (GITQH). The interval 496–499 (DTPG) is G3. Residues 496 to 500 (DTPGH) and 550 to 553 (NKID) each bind GTP. Residues 550–553 (NKID) form a G4 region. The tract at residues 586–588 (SAQ) is G5.

This sequence belongs to the TRAFAC class translation factor GTPase superfamily. Classic translation factor GTPase family. IF-2 subfamily.

The protein localises to the cytoplasm. One of the essential components for the initiation of protein synthesis. Protects formylmethionyl-tRNA from spontaneous hydrolysis and promotes its binding to the 30S ribosomal subunits. Also involved in the hydrolysis of GTP during the formation of the 70S ribosomal complex. The protein is Translation initiation factor IF-2 of Teredinibacter turnerae (strain ATCC 39867 / T7901).